Here is a 179-residue protein sequence, read N- to C-terminus: uncharacterized protein (179 aa).

This is an uncharacterized protein from Acanthamoeba polyphaga mimivirus (APMV).